A 656-amino-acid polypeptide reads, in one-letter code: Threonine--tRNA ligase (656 aa).

Residues 2–67 (LMSQITIILP…KDQTKVALVT (66 aa)) form the TGS domain. The catalytic stretch occupies residues 251–542 (DHRKLGKELG…YLEHTAGHLP (292 aa)). Positions 342, 393, and 519 each coordinate Zn(2+).

This sequence belongs to the class-II aminoacyl-tRNA synthetase family. Homodimer. The cofactor is Zn(2+).

It is found in the cytoplasm. The catalysed reaction is tRNA(Thr) + L-threonine + ATP = L-threonyl-tRNA(Thr) + AMP + diphosphate + H(+). Catalyzes the attachment of threonine to tRNA(Thr) in a two-step reaction: L-threonine is first activated by ATP to form Thr-AMP and then transferred to the acceptor end of tRNA(Thr). Also edits incorrectly charged L-seryl-tRNA(Thr). The protein is Threonine--tRNA ligase of Bdellovibrio bacteriovorus (strain ATCC 15356 / DSM 50701 / NCIMB 9529 / HD100).